The following is a 117-amino-acid chain: uncharacterized protein (117 aa).

The N-terminal stretch at 1–24 (MMTEFGSAMTLVTGLVAYGAYVKS) is a signal peptide. Residues 42-117 (EKENFNYNNN…NNQIKRRLFD (76 aa)) are disordered. Over residues 46–95 (FNYNNNNNNNNNNNNNNSNNNDNNNNNNSNSNNNNNNNNNNNNNNNNNIN) the composition is skewed to low complexity. Residues Asn61 and Asn72 are each glycosylated (N-linked (GlcNAc...) asparagine). Residues 96–110 (DKQINGTNIFDSNNQ) are compositionally biased toward polar residues.

It is found in the secreted. This is an uncharacterized protein from Dictyostelium discoideum (Social amoeba).